The following is a 215-amino-acid chain: uncharacterized protein (215 aa).

Belongs to the thiaminase-2 family.

This is an uncharacterized protein from Haemophilus influenzae (strain ATCC 51907 / DSM 11121 / KW20 / Rd).